Reading from the N-terminus, the 389-residue chain is Chitin-binding protein CbpD (389 aa).

Residues 1 to 25 (MKHYSATLALLPLTLALFLPQAAHA) form the signal peptide. The 183-residue stretch at 26–208 (HGSMETPPSR…EAFYACIDVS (183 aa)) folds into the Chitin-binding type-4 domain.

Can be detected in the extracellular supernatant as a 43 kDa protein and a 23 kDa protein, both proteins have the same N-terminus. Only the larger protein binds chitin, which may protect it from further processing and/or degradation by elastase (lasB). It is not clear whether the short form is functional or a degradation product.

The protein resides in the secreted. Binds chitin but does not hydrolyze it, has no detectable protease or staphylolytic activity. The polypeptide is Chitin-binding protein CbpD (Pseudomonas aeruginosa (strain ATCC 15692 / DSM 22644 / CIP 104116 / JCM 14847 / LMG 12228 / 1C / PRS 101 / PAO1)).